The chain runs to 262 residues: ABSCISIC ACID-INSENSITIVE 5-like protein 3 (262 aa).

Phosphoserine is present on residues S21, S43, and S66. T104 is subject to Phosphothreonine. Residues 190-253 (VERRQKRMIK…SEPPPDPKWK (64 aa)) form the bZIP domain. Residues 192–211 (RRQKRMIKNRESAARSRARK) form a basic motif region. The segment at 218 to 232 (LEIKVSRLEEENEKL) is leucine-zipper. Residues 239–252 (EKILPSEPPPDPKW) are compositionally biased toward basic and acidic residues. Residues 239–262 (EKILPSEPPPDPKWKLRRTNSASL) form a disordered region.

The protein belongs to the bZIP family. ABI5 subfamily. In terms of assembly, DNA-binding heterodimer with ABI5/DPBF1, DPBF2 or AREB3/DPBF3. Interacts with the AFP proteins AFP2, AFP3 and AFP4. As to expression, predominantly expressed in seeds.

It localises to the nucleus. Functionally, binds to the embryo specification element and the ABA-responsive element (ABRE) of the Dc3 gene promoter and to the ABRE of the Em1 gene promoter. Could participate in abscisic acid-regulated gene expression during seed development. In Arabidopsis thaliana (Mouse-ear cress), this protein is ABSCISIC ACID-INSENSITIVE 5-like protein 3 (DPBF4).